A 148-amino-acid polypeptide reads, in one-letter code: MKALLLLGLLLLSVTVQGKIFERCDLARTLKRLGLAGFKGVSLANWMCLAKWESNYNTKATNYNPGSRSTDYGIFQINSRYWCNDGKTPRAVNACHIPCSDLLKDDITQAVACAKRVVSDPNGIRAWVAWRAHCENQDVSQYVRNCGV.

The signal sequence occupies residues 1–18 (MKALLLLGLLLLSVTVQG). Positions 19-148 (KIFERCDLAR…VSQYVRNCGV (130 aa)) constitute a C-type lysozyme domain. Cystine bridges form between cysteine 24-cysteine 146, cysteine 48-cysteine 134, cysteine 83-cysteine 99, and cysteine 95-cysteine 113. Active-site residues include glutamate 53 and aspartate 71.

Belongs to the glycosyl hydrolase 22 family. As to quaternary structure, monomer.

The catalysed reaction is Hydrolysis of (1-&gt;4)-beta-linkages between N-acetylmuramic acid and N-acetyl-D-glucosamine residues in a peptidoglycan and between N-acetyl-D-glucosamine residues in chitodextrins.. Its function is as follows. Lysozymes have primarily a bacteriolytic function; those in tissues and body fluids are associated with the monocyte-macrophage system and enhance the activity of immunoagents. This chain is Lysozyme C (LYZ), found in Halichoerus grypus (Gray seal).